A 440-amino-acid polypeptide reads, in one-letter code: UDP-N-acetylmuramoylalanine--D-glutamate ligase (440 aa).

An ATP-binding site is contributed by 109-115 (GTNGKTT).

The protein belongs to the MurCDEF family.

It localises to the cytoplasm. It carries out the reaction UDP-N-acetyl-alpha-D-muramoyl-L-alanine + D-glutamate + ATP = UDP-N-acetyl-alpha-D-muramoyl-L-alanyl-D-glutamate + ADP + phosphate + H(+). The protein operates within cell wall biogenesis; peptidoglycan biosynthesis. Functionally, cell wall formation. Catalyzes the addition of glutamate to the nucleotide precursor UDP-N-acetylmuramoyl-L-alanine (UMA). The sequence is that of UDP-N-acetylmuramoylalanine--D-glutamate ligase from Rubrobacter xylanophilus (strain DSM 9941 / JCM 11954 / NBRC 16129 / PRD-1).